The chain runs to 500 residues: UBX domain-containing protein 5 (500 aa).

A compositionally biased stretch (low complexity) spans 50–61 (SNNTPTPSNSTP). Positions 50 to 70 (SNNTPTPSNSTPMAPTSVDSD) are disordered. Serine 139 carries the post-translational modification Phosphoserine. 2 disordered regions span residues 142-169 (NQRLDDTNTNTYINDNSSDSLDSEEEND) and 371-399 (ESLNNNSSKSNQEEVPSTGEEQKRVQEPD). The span at 148 to 161 (TNTNTYINDNSSDS) shows a compositional bias: low complexity. In terms of domain architecture, UBX spans 415–493 (KPGITTRIQI…GLKNSSLLLE (79 aa)).

As to quaternary structure, interacts with CDC48.

It is found in the nucleus. The protein resides in the cytoplasm. In terms of biological role, involved in CDC48-dependent protein degradation through the ubiquitin/proteasome pathway. The polypeptide is UBX domain-containing protein 5 (UBX5) (Saccharomyces cerevisiae (strain ATCC 204508 / S288c) (Baker's yeast)).